The primary structure comprises 285 residues: Probable endonuclease 4 (285 aa).

Zn(2+) contacts are provided by His-69, His-109, Glu-145, Asp-179, His-182, His-216, Asp-229, His-231, and Glu-261.

This sequence belongs to the AP endonuclease 2 family. Zn(2+) serves as cofactor.

It carries out the reaction Endonucleolytic cleavage to 5'-phosphooligonucleotide end-products.. Endonuclease IV plays a role in DNA repair. It cleaves phosphodiester bonds at apurinic or apyrimidinic (AP) sites, generating a 3'-hydroxyl group and a 5'-terminal sugar phosphate. The protein is Probable endonuclease 4 of Salmonella arizonae (strain ATCC BAA-731 / CDC346-86 / RSK2980).